Consider the following 152-residue polypeptide: Serglycin (152 aa).

The signal sequence occupies residues 1–25 (MQVPVGSRLVLALAFVLVWGSSVQG). The propeptide at 26–74 (YPARRARYQWVRCKPNGFFANCIEEKGPQFDLIDESNNIGPPMNNPVLM) is activation peptide. Cysteine 38 and cysteine 47 are oxidised to a cystine. The disordered stretch occupies residues 66–115 (PPMNNPVLMEGPSKDFISNYDDYGSGSGSGSGSGSGSGSGSGSGFLGDME). A run of 10 repeats spans residues 89–90 (GS), 91–92 (GS), 93–94 (GS), 95–96 (GS), 97–98 (GS), 99–100 (GS), 101–102 (GS), 103–104 (GS), 105–106 (GS), and 107–108 (GS). Residues 89–108 (GSGSGSGSGSGSGSGSGSGS) are 10 X 2 AA tandem repeats of G-S. Residues 90–110 (SGSGSGSGSGSGSGSGSGSGF) are compositionally biased toward gly residues. Serine 92 and serine 94 each carry an O-linked (Xyl...) (glycosaminoglycan) serine glycan. Residues serine 98, serine 100, serine 102, serine 104, serine 106, and serine 108 are each glycosylated (O-linked (Xyl...) (glycosaminoglycan) serine).

It belongs to the serglycin family. Binds to activated CD44 and to GZMB. In terms of processing, O-glycosylated; contains chondroitin sulfate and heparan sulfate.

The protein resides in the cytoplasmic granule. It localises to the cytolytic granule. It is found in the secreted. Its subcellular location is the extracellular space. The protein localises to the golgi apparatus. Plays a role in formation of mast cell secretory granules and mediates storage of various compounds in secretory vesicles. Required for storage of some proteases in both connective tissue and mucosal mast cells and for storage of granzyme B in T-lymphocytes. Plays a role in localizing neutrophil elastase in azurophil granules of neutrophils. Mediates processing of MMP2. Plays a role in cytotoxic cell granule-mediated apoptosis by forming a complex with granzyme B which is delivered to cells by perforin to induce apoptosis. Regulates the secretion of TNF-alpha and may also regulate protease secretion. Inhibits bone mineralization. The chain is Serglycin (Srgn) from Mus musculus (Mouse).